Consider the following 339-residue polypeptide: Phenylalanine--tRNA ligase alpha subunit (339 aa).

Glu247 lines the Mg(2+) pocket.

This sequence belongs to the class-II aminoacyl-tRNA synthetase family. Phe-tRNA synthetase alpha subunit type 1 subfamily. Tetramer of two alpha and two beta subunits. Mg(2+) is required as a cofactor.

The protein localises to the cytoplasm. It catalyses the reaction tRNA(Phe) + L-phenylalanine + ATP = L-phenylalanyl-tRNA(Phe) + AMP + diphosphate + H(+). This chain is Phenylalanine--tRNA ligase alpha subunit (pheS), found in Deinococcus radiodurans (strain ATCC 13939 / DSM 20539 / JCM 16871 / CCUG 27074 / LMG 4051 / NBRC 15346 / NCIMB 9279 / VKM B-1422 / R1).